The chain runs to 430 residues: Putrescine 2-hydroxylase (430 aa).

One can recognise a Rieske domain in the interval 88-203 (LYVGHQKLVP…LRDCHGLLFE (116 aa)). The [2Fe-2S] cluster site is built by C128, H130, C162, and H165.

It belongs to the bacterial ring-hydroxylating dioxygenase alpha subunit family. It depends on [2Fe-2S] cluster as a cofactor.

Functionally, rieske-type iron sulfur protein that can catalyze in vitro the 2-hydroxylation of putrescine, forming 2-hydroxyputrescine. May be involved in the biosynthesis of the cyclic hydroxamate siderophore alcaligin. In Bordetella bronchiseptica (strain ATCC BAA-588 / NCTC 13252 / RB50) (Alcaligenes bronchisepticus), this protein is Putrescine 2-hydroxylase.